The sequence spans 207 residues: dTTP/UTP pyrophosphatase (207 aa).

The Proton acceptor role is filled by D87.

This sequence belongs to the Maf family. YhdE subfamily. A divalent metal cation serves as cofactor.

It is found in the cytoplasm. It catalyses the reaction dTTP + H2O = dTMP + diphosphate + H(+). The enzyme catalyses UTP + H2O = UMP + diphosphate + H(+). Nucleoside triphosphate pyrophosphatase that hydrolyzes dTTP and UTP. May have a dual role in cell division arrest and in preventing the incorporation of modified nucleotides into cellular nucleic acids. This is dTTP/UTP pyrophosphatase from Bordetella pertussis (strain Tohama I / ATCC BAA-589 / NCTC 13251).